The primary structure comprises 285 residues: Bifunctional protein FolD (285 aa).

Residues 166-168, serine 191, and threonine 232 each bind NADP(+); that span reads GRS.

This sequence belongs to the tetrahydrofolate dehydrogenase/cyclohydrolase family. In terms of assembly, homodimer.

It catalyses the reaction (6R)-5,10-methylene-5,6,7,8-tetrahydrofolate + NADP(+) = (6R)-5,10-methenyltetrahydrofolate + NADPH. The enzyme catalyses (6R)-5,10-methenyltetrahydrofolate + H2O = (6R)-10-formyltetrahydrofolate + H(+). It functions in the pathway one-carbon metabolism; tetrahydrofolate interconversion. Its function is as follows. Catalyzes the oxidation of 5,10-methylenetetrahydrofolate to 5,10-methenyltetrahydrofolate and then the hydrolysis of 5,10-methenyltetrahydrofolate to 10-formyltetrahydrofolate. The sequence is that of Bifunctional protein FolD from Chloroflexus aggregans (strain MD-66 / DSM 9485).